Consider the following 129-residue polypeptide: N16.2 matrix protein (129 aa).

A signal peptide spans 1 to 23; that stretch reads MKCTLRWTITALVLLGICHLARP. Repeat copies occupy residues 91 to 92, 93 to 94, 95 to 96, 97 to 98, and 99 to 100. The 5 X 2 AA tandem repeats of N-G stretch occupies residues 91–100; it reads NGNGDGNGNG.

This sequence belongs to the N16 matrix protein family. In terms of assembly, heterooligomer; disulfide-linked. Pif97, Pif80, N16 and other proteins form a complex. Component of conchiolin, the organic matrix of nacre. Expressed at extremely high levels in the dorsal region of the mantle, which region may be responsible for the nacreous layer formation, but only in trace amounts at the mantle edge, which region may be responsible for the prismatic layer formation.

The protein resides in the secreted. Its subcellular location is the extracellular space. It is found in the extracellular matrix. Its function is as follows. May be specifically involved in the formation of the nacreous layer. This is N16.2 matrix protein from Pinctada fucata (Akoya pearl oyster).